A 179-amino-acid polypeptide reads, in one-letter code: Large ribosomal subunit protein uL5 (179 aa).

Belongs to the universal ribosomal protein uL5 family. As to quaternary structure, part of the 50S ribosomal subunit; part of the 5S rRNA/L5/L18/L25 subcomplex. Contacts the 5S rRNA and the P site tRNA. Forms a bridge to the 30S subunit in the 70S ribosome.

Its function is as follows. This is one of the proteins that bind and probably mediate the attachment of the 5S RNA into the large ribosomal subunit, where it forms part of the central protuberance. In the 70S ribosome it contacts protein S13 of the 30S subunit (bridge B1b), connecting the 2 subunits; this bridge is implicated in subunit movement. Contacts the P site tRNA; the 5S rRNA and some of its associated proteins might help stabilize positioning of ribosome-bound tRNAs. The protein is Large ribosomal subunit protein uL5 of Proteus mirabilis (strain HI4320).